A 490-amino-acid chain; its full sequence is Probable malate:quinone oxidoreductase (490 aa).

This sequence belongs to the MQO family. Requires FAD as cofactor.

It carries out the reaction (S)-malate + a quinone = a quinol + oxaloacetate. Its pathway is carbohydrate metabolism; tricarboxylic acid cycle; oxaloacetate from (S)-malate (quinone route): step 1/1. The sequence is that of Probable malate:quinone oxidoreductase from Corynebacterium jeikeium (strain K411).